A 258-amino-acid polypeptide reads, in one-letter code: Electron transfer flavoprotein beta subunit lysine methyltransferase (258 aa).

Belongs to the methyltransferase superfamily. ETFBKMT family.

It localises to the cytoplasm. Its subcellular location is the mitochondrion matrix. It catalyses the reaction L-lysyl-[protein] + 3 S-adenosyl-L-methionine = N(6),N(6),N(6)-trimethyl-L-lysyl-[protein] + 3 S-adenosyl-L-homocysteine + 3 H(+). Its function is as follows. Protein-lysine methyltransferase that selectively trimethylates the flavoprotein ETFB in mitochondria. Thereby, may negatively regulate the function of ETFB in electron transfer from Acyl-CoA dehydrogenases to the main respiratory chain. The chain is Electron transfer flavoprotein beta subunit lysine methyltransferase from Danio rerio (Zebrafish).